The sequence spans 519 residues: MNRDMPSGRELKSFLEQTFSTLDAVLSGQNARLQEKEVGTVSFVGQGIVRASGLPHVRSEELVVFPGNLLGLVFNVDLDEIGIITLDHTEDISAGSAVRRTGRVLDVPVGEALLGRVLDPMGRPLDNRGEVAAARRLPLEREAPAVMDRAPVSVPLQTGIKVIDSLIAIGRGQRELILGDRQTGKTAIILDTIINQHDKNVICIYCAIGKQSADTARVVSVLESFRTLPYCIIVVAAGEDPPGLQYIAPYAATSMGEYFMKRGKDVLVIYDDLTRHARAYRELSLLLRRPPGREAYPGDIFYIHARMLERATHLREELGGGSLTAIPIIETEAQDISAYIPTNLISITDGQIYLSSRLFQKGILPAIDVGKSVSRVGGKTQLPAYRTVAGDLRLSYSQFEELETFSRFGTRLDEETRRKLERGRRVREILKQKQYNPLCVADQIAALLSVTSGALDGISLENIGAAEKRIQEAVHVQLSDLCDRIKKGEPLTVHDRKTLLDAARSAVAAEPERHRNADS.

179 to 186 (GDRQTGKT) is a binding site for ATP.

It belongs to the ATPase alpha/beta chains family. In terms of assembly, F-type ATPases have 2 components, CF(1) - the catalytic core - and CF(0) - the membrane proton channel. CF(1) has five subunits: alpha(3), beta(3), gamma(1), delta(1), epsilon(1). CF(0) has three main subunits: a(1), b(2) and c(9-12). The alpha and beta chains form an alternating ring which encloses part of the gamma chain. CF(1) is attached to CF(0) by a central stalk formed by the gamma and epsilon chains, while a peripheral stalk is formed by the delta and b chains.

The protein localises to the cell inner membrane. It catalyses the reaction ATP + H2O + 4 H(+)(in) = ADP + phosphate + 5 H(+)(out). Its function is as follows. Produces ATP from ADP in the presence of a proton gradient across the membrane. The alpha chain is a regulatory subunit. This Syntrophus aciditrophicus (strain SB) protein is ATP synthase subunit alpha 2.